Consider the following 505-residue polypeptide: tRNA-2-methylthio-N(6)-dimethylallyladenosine synthase (505 aa).

The interval 1–39 (MGQKAKAQAPTTHPRPHTLSSQVAPALPRRPRHAAPESL) is disordered. The region spanning 47-162 (MKAHLITYGC…IGAALESNER (116 aa)) is the MTTase N-terminal domain. 6 residues coordinate [4Fe-4S] cluster: C56, C92, C125, C194, C198, and C201. The Radical SAM core domain occupies 180 to 413 (PSGKLQAHLT…IARQKDWSAR (234 aa)). One can recognise a TRAM domain in the interval 416–479 (AQKVGTVQQV…PHMMYGHILG (64 aa)).

It belongs to the methylthiotransferase family. MiaB subfamily. As to quaternary structure, monomer. The cofactor is [4Fe-4S] cluster.

Its subcellular location is the cytoplasm. It catalyses the reaction N(6)-dimethylallyladenosine(37) in tRNA + (sulfur carrier)-SH + AH2 + 2 S-adenosyl-L-methionine = 2-methylsulfanyl-N(6)-dimethylallyladenosine(37) in tRNA + (sulfur carrier)-H + 5'-deoxyadenosine + L-methionine + A + S-adenosyl-L-homocysteine + 2 H(+). Functionally, catalyzes the methylthiolation of N6-(dimethylallyl)adenosine (i(6)A), leading to the formation of 2-methylthio-N6-(dimethylallyl)adenosine (ms(2)i(6)A) at position 37 in tRNAs that read codons beginning with uridine. This chain is tRNA-2-methylthio-N(6)-dimethylallyladenosine synthase, found in Deinococcus radiodurans (strain ATCC 13939 / DSM 20539 / JCM 16871 / CCUG 27074 / LMG 4051 / NBRC 15346 / NCIMB 9279 / VKM B-1422 / R1).